A 197-amino-acid polypeptide reads, in one-letter code: Segregation and condensation protein B (197 aa).

This sequence belongs to the ScpB family. As to quaternary structure, homodimer. Homodimerization may be required to stabilize the binding of ScpA to the Smc head domains. Component of a cohesin-like complex composed of ScpA, ScpB and the Smc homodimer, in which ScpA and ScpB bind to the head domain of Smc. The presence of the three proteins is required for the association of the complex with DNA.

The protein localises to the cytoplasm. In terms of biological role, participates in chromosomal partition during cell division. May act via the formation of a condensin-like complex containing Smc and ScpA that pull DNA away from mid-cell into both cell halves. The sequence is that of Segregation and condensation protein B from Malacoplasma penetrans (strain HF-2) (Mycoplasma penetrans).